We begin with the raw amino-acid sequence, 95 residues long: Putative membrane protein insertion efficiency factor (95 aa).

It belongs to the UPF0161 family.

The protein localises to the cell membrane. Its function is as follows. Could be involved in insertion of integral membrane proteins into the membrane. The sequence is that of Putative membrane protein insertion efficiency factor from Lactobacillus delbrueckii subsp. bulgaricus (strain ATCC 11842 / DSM 20081 / BCRC 10696 / JCM 1002 / NBRC 13953 / NCIMB 11778 / NCTC 12712 / WDCM 00102 / Lb 14).